We begin with the raw amino-acid sequence, 268 residues long: Mediator of RNA polymerase II transcription subunit 18 (268 aa).

It belongs to the Mediator complex subunit 18 family. Component of the Mediator complex.

It localises to the nucleus. Its function is as follows. Component of the Mediator complex, a coactivator involved in the regulated transcription of nearly all RNA polymerase II-dependent genes. Mediator functions as a bridge to convey information from gene-specific regulatory proteins to the basal RNA polymerase II transcription machinery. Mediator is recruited to promoters by direct interactions with regulatory proteins and serves as a scaffold for the assembly of a functional preinitiation complex with RNA polymerase II and the general transcription factors. The polypeptide is Mediator of RNA polymerase II transcription subunit 18 (srb5) (Neosartorya fischeri (strain ATCC 1020 / DSM 3700 / CBS 544.65 / FGSC A1164 / JCM 1740 / NRRL 181 / WB 181) (Aspergillus fischerianus)).